The primary structure comprises 356 residues: Outer membrane protein Omp38 (356 aa).

A signal peptide spans 1–19 (MKLSRIALATMLVAAPLAA). Residues 221-339 (ELTEDLNMEL…RVFATITGSR (119 aa)) form the OmpA-like domain. Meso-2,6-diaminopimelate is bound by residues Asn-237, Asp-271, Thr-273, Asn-279, and Arg-286.

Belongs to the outer membrane OOP (TC 1.B.6) superfamily. In terms of assembly, homotrimer. Forms a pore with a size of 1.3 nm.

The protein resides in the cell outer membrane. It is found in the host mitochondrion. Its function is as follows. Functions as a porin. Induces apoptosis in human cell lines through caspase-dependent and AIF-dependent pathways. Purified Omp38 enters host cell and localizes to the mitochondria, which presumably leads to a release of proapoptotic molecules such as cytochrome c and AIF (apoptosis-inducing factor). Binds peptidoglycan, contributes to cell wall maintenance. In Acinetobacter baumannii (strain ATCC 19606 / DSM 30007 / JCM 6841 / CCUG 19606 / CIP 70.34 / NBRC 109757 / NCIMB 12457 / NCTC 12156 / 81), this protein is Outer membrane protein Omp38.